A 302-amino-acid polypeptide reads, in one-letter code: MPRLGLILNDGKELALKAALSIESKLEKSGYEVVRVSSSGGMVGFANPDQHMRTLGYNACVPEGFDPSMKLAIVLGGDGTVLSAARQTAPVGVPILTINTGHLGFLSEAYLPDIDKALEQVLASQWEIEERTSLVVSVMRGEQRRWEALCLNEMALHREPLTSMCHFEISIGRHAPVDISADGVILSTPTGSTAYSLSAGGPVITPDCPVLQLTPIAPHSLASRALVFSDLEPVTVFPATPERLMMVVDGTAGCYVWPEDRVLIRKSNHPVRFIRLTDHEFFQVLRKKLGWGLPHVAKPEKY.

D78 (proton acceptor) is an active-site residue. NAD(+) contacts are provided by residues 78-79 (DG), 152-153 (NE), D182, 193-198 (TAYSLS), and A217.

The protein belongs to the NAD kinase family. A divalent metal cation is required as a cofactor.

The protein localises to the cytoplasm. It carries out the reaction NAD(+) + ATP = ADP + NADP(+) + H(+). Functionally, involved in the regulation of the intracellular balance of NAD and NADP, and is a key enzyme in the biosynthesis of NADP. Catalyzes specifically the phosphorylation on 2'-hydroxyl of the adenosine moiety of NAD to yield NADP. The protein is NAD kinase 2 of Prochlorococcus marinus (strain SARG / CCMP1375 / SS120).